The following is a 306-amino-acid chain: Glutathione transport system permease protein GsiC (306 aa).

Topologically, residues 1–8 (MLNYVIKR) are cytoplasmic. The chain crosses the membrane as a helical span at residues 9-29 (LLGLIPTLFIVSVLVFLFVHM). Residues 30–102 (LPGDPARLIA…SRFMPTLWLT (73 aa)) are Periplasmic-facing. In terms of domain architecture, ABC transmembrane type-1 spans 95-292 (FMPTLWLTIT…LEFILINLVV (198 aa)). A helical membrane pass occupies residues 103–123 (ITSMVWAVIFGMAAGIIAAVW). At 124 to 134 (RNRWPDRLSMT) the chain is on the cytoplasmic side. Residues 135-155 (IAVSGISFPAFALGMFLIQVF) traverse the membrane as a helical segment. Residues 156 to 168 (SVELGWLPTVGAD) lie on the Periplasmic side of the membrane. Residues 169–189 (SWQHYILPSLTLGAAVAAVMA) form a helical membrane-spanning segment. Residues 190–228 (RFTRASFVDVLSEDYMRTARAKGVSETWVVLKHGLRNAM) lie on the Cytoplasmic side of the membrane. Residues 229–249 (IPVVTMMGLQFGFLLGGSIVV) form a helical membrane-spanning segment. The Periplasmic segment spans residues 250–277 (EKVFNWPGLGRLLVDSVEMRDYPVIQAE). A helical transmembrane segment spans residues 278–298 (ILLFSLEFILINLVVDVLYAA). Topologically, residues 299–306 (INPAIRYK) are cytoplasmic.

It belongs to the binding-protein-dependent transport system permease family. As to quaternary structure, the complex is composed of two ATP-binding proteins (GsiA), two transmembrane proteins (GsiC and GsiD) and a solute-binding protein (GsiB).

It localises to the cell inner membrane. Part of the ABC transporter complex GsiABCD involved in glutathione import. Probably responsible for the translocation of the substrate across the membrane. In Shigella flexneri serotype 5b (strain 8401), this protein is Glutathione transport system permease protein GsiC.